A 794-amino-acid polypeptide reads, in one-letter code: MQVHVGLTLLLCAVLLSSATASSDDESNQDESIDSKSSLPADESVKDHSTTGRVVAGQIFVDSEDPEVESPLQEEEESSKTEEEVSVGEEISFVESPSLSSKSYEEAKRARKPVLTAIEGTAHGEPCHFPFLFLDKEYDECTSDGRQDGRLWCATTYDYKTDEKWGFCETEEDAAKRRQMQEAEMIYQAGMKILNGSNRKSQKREAYRYLQKAAGMNHTKALERVSYALLFGDYLTQNIQAAKEMFEKLTEEGSPKGQTALGFLYVSGLGVNSSQAKALVYYTFGALGGNLIAHMVLGYRYWAGIGVLQSCESVLTHYRLVANHVASDISLTGGSVVQRIRLPDEVENPGMNSGMLEEDLIQYYQFLAEKGDVQAQVGLGQLHLHGGRGVEQNHQRAFDYFNLAANAGNSHAMAFLGKMYSEGSDIVPQSNETALHYFKKAADMGNPVGQSGLGMAYLYGRGIQVNYDLALKYFQKAAEQGWVDGQLQLGSMYYNGIGVKRDYKQALKYFNLASQGGHILAFYNLAQMHASGTGVMRSCHTAVELFKNVCERGRWSERLMTAYNSYKDGDYNAAVVQYLLLAEQGYEVAQSNAAFILDQREATIVGENETYPRALLHWNRAASQGYTVARIKLGDYHFYGFGTDVDYETAFIHYRLASEQQHSAQAMFNLGYMHEKGLGIKQDIHLAKRFYDMAAEASPDAQVPVFLALCKLGVVYFLQYIREANIRDIFTQLDMDQLLGPEWDLYLMTIIALLLGTVIAYRQRQHQDVPVPRPPGPWPAPPQQEGPPEQQPPQ.

Positions Met-1–Ala-21 are cleaved as a signal peptide. The segment at Thr-20–Ile-91 is disordered. The segment at Ser-22–Gln-737 is interaction with ERLEC1, OS9 and SYVN1. Topologically, residues Ser-22–Leu-738 are lumenal. Composition is skewed to acidic residues over residues Ser-23–Ser-32 and Asp-62–Glu-77. Ser-63 bears the Phosphoserine mark. In terms of domain architecture, Fibronectin type-II spans Ala-122–Thr-170. Cystine bridges form between Cys-127–Cys-153 and Cys-141–Cys-168. 9 Sel1-like repeats span residues Ala-183–His-218, Thr-219–Ser-254, Pro-255–Asn-290, Leu-291–Ala-326, Val-373–Asn-409, Ser-410–Asn-446, Pro-447–Trp-482, Val-483–His-518, and Ile-519–Arg-554. Residues Asn-195 and Asn-217 are each glycosylated (N-linked (GlcNAc...) asparagine). N-linked (GlcNAc...) asparagine glycosylation occurs at Asn-272. Positions Asn-352–Arg-537 are important for homodimerization and oligomerization. Asn-431 is a glycosylation site (N-linked (GlcNAc...) asparagine). Asn-608 carries N-linked (GlcNAc...) asparagine glycosylation. Sel1-like repeat units follow at residues Thr-627–His-662 and Ala-664–Pro-699. The segment at Thr-643 to Glu-723 is interaction with SYVN1. The interval Leu-738–Gln-794 is mediates retention in the endoplasmic reticulum. Residues Leu-739–Ile-759 form a helical membrane-spanning segment. Over Ala-760–Gln-794 the chain is Cytoplasmic. Residues Asp-768 to Gln-794 form a disordered region. The segment covering Val-771 to Gln-794 has biased composition (pro residues).

It belongs to the sel-1 family. As to quaternary structure, homodimer and homooligomer. May form a complex with ERLEC1, HSPA5, OS9, and SYVN1. Interacts with FOXRED2 and EDEM1. Interacts with LPL and LMF1; may stabilize the complex formed by LPL and LMF1 and thereby promote the export of LPL dimers. Component of the HRD1 complex, which comprises at least SYNV1/HRD1, DERL1/2, FAM8A1, HERPUD1/HERP, OS9, SEL1L and UBE2J1. SYNV1 assembles with SEL1L and FAM8A1 through its transmembrane domains, but interaction with its cytoplasmic domain is required to confer stability to FAM8A1 and enhance recruitment of HERPUD1. The interaction with SYNV1/HRD1 is direct. Post-translationally, N-glycosylated.

It is found in the endoplasmic reticulum membrane. In terms of biological role, plays a role in the endoplasmic reticulum quality control (ERQC) system also called ER-associated degradation (ERAD) involved in ubiquitin-dependent degradation of misfolded endoplasmic reticulum proteins. Enhances SYVN1 stability. Plays a role in LPL maturation and secretion. Required for normal differentiation of the pancreas epithelium, and for normal exocrine function and survival of pancreatic cells. May play a role in Notch signaling. The chain is Protein sel-1 homolog 1 (Sel1l) from Mesocricetus auratus (Golden hamster).